The sequence spans 257 residues: MKKIALFITASLIAGNTLAAQTYIRNGNIYTHEGQWVAEVGAFGSTDLLKDQDKSYSALLNFGYHGEDLNADLTGINYRFFGNTGDVVNLGTYLTGSGVTYDQDSANSVKGMDKRKATIDLGLNADIALGDGTVSTYFQHDILNENKGYKTGVNYFHVIDLGAVDLVPFAGISYQSSDYNNYYFGVKDKEATAQRKAYHAGGDFSYNLGYKLAYPINDRWEITQTSSYTRLGSDVTNSPIVESANQWLVGATVAYHF.

The signal sequence occupies residues 1 to 19; sequence MKKIALFITASLIAGNTLA.

Belongs to the MipA/OmpV family.

The protein localises to the cell outer membrane. In Vibrio anguillarum (Listonella anguillarum), this protein is Outer membrane protein Omp26La.